A 562-amino-acid polypeptide reads, in one-letter code: NAD-dependent malic enzyme (562 aa).

The Proton donor role is filled by Tyr-101. Arg-154 serves as a coordination point for NAD(+). The Proton acceptor role is filled by Lys-172. A divalent metal cation is bound by residues Glu-243, Asp-244, and Asp-267. 2 residues coordinate NAD(+): Asp-267 and Asn-415.

The protein belongs to the malic enzymes family. As to quaternary structure, homotetramer. Requires Mg(2+) as cofactor. Mn(2+) serves as cofactor.

It catalyses the reaction (S)-malate + NAD(+) = pyruvate + CO2 + NADH. The enzyme catalyses oxaloacetate + H(+) = pyruvate + CO2. The chain is NAD-dependent malic enzyme from Shewanella sediminis (strain HAW-EB3).